A 471-amino-acid chain; its full sequence is UDP-N-acetylmuramate--L-alanine ligase (471 aa).

An ATP-binding site is contributed by glycine 114–threonine 120.

It belongs to the MurCDEF family.

It is found in the cytoplasm. It catalyses the reaction UDP-N-acetyl-alpha-D-muramate + L-alanine + ATP = UDP-N-acetyl-alpha-D-muramoyl-L-alanine + ADP + phosphate + H(+). Its pathway is cell wall biogenesis; peptidoglycan biosynthesis. In terms of biological role, cell wall formation. This chain is UDP-N-acetylmuramate--L-alanine ligase, found in Allorhizobium ampelinum (strain ATCC BAA-846 / DSM 112012 / S4) (Agrobacterium vitis (strain S4)).